The chain runs to 1171 residues: ATP-dependent helicase/deoxyribonuclease subunit B (1171 aa).

In terms of domain architecture, UvrD-like helicase ATP-binding spans 1–301; that stretch reads MSLRFVIGRA…AHLEMHYEAR (301 aa). An ATP-binding site is contributed by 8–15; that stretch reads GRAGSGKS. The region spanning 281–587 is the UvrD-like helicase C-terminal domain; it reads MKQPRFHSQA…QFANIPPSLD (307 aa). 4 residues coordinate [4Fe-4S] cluster: Cys805, Cys1129, Cys1132, and Cys1138.

The protein belongs to the helicase family. AddB/RexB type 1 subfamily. In terms of assembly, heterodimer of AddA and AddB. Mg(2+) serves as cofactor. Requires [4Fe-4S] cluster as cofactor.

Its function is as follows. The heterodimer acts as both an ATP-dependent DNA helicase and an ATP-dependent, dual-direction single-stranded exonuclease. Recognizes the chi site generating a DNA molecule suitable for the initiation of homologous recombination. The AddB subunit has 5' -&gt; 3' nuclease activity but not helicase activity. The protein is ATP-dependent helicase/deoxyribonuclease subunit B of Bacillus mycoides (strain KBAB4) (Bacillus weihenstephanensis).